Here is a 296-residue protein sequence, read N- to C-terminus: Mycothiol acetyltransferase (296 aa).

N-acetyltransferase domains follow at residues 17-146 (YNHR…AVYD) and 156-296 (LKTA…VYEK). Glu44 is a binding site for 1D-myo-inositol 2-(L-cysteinylamino)-2-deoxy-alpha-D-glucopyranoside. 81-83 (LAV) is an acetyl-CoA binding site. 3 residues coordinate 1D-myo-inositol 2-(L-cysteinylamino)-2-deoxy-alpha-D-glucopyranoside: Glu183, Lys222, and Glu230. Acetyl-CoA contacts are provided by residues 234 to 236 (VGL) and 241 to 247 (RGKGLGD). 1D-myo-inositol 2-(L-cysteinylamino)-2-deoxy-alpha-D-glucopyranoside is bound at residue Tyr268.

Belongs to the acetyltransferase family. MshD subfamily. In terms of assembly, monomer.

The catalysed reaction is 1D-myo-inositol 2-(L-cysteinylamino)-2-deoxy-alpha-D-glucopyranoside + acetyl-CoA = mycothiol + CoA + H(+). In terms of biological role, catalyzes the transfer of acetyl from acetyl-CoA to desacetylmycothiol (Cys-GlcN-Ins) to form mycothiol. In Corynebacterium efficiens (strain DSM 44549 / YS-314 / AJ 12310 / JCM 11189 / NBRC 100395), this protein is Mycothiol acetyltransferase.